The primary structure comprises 146 residues: Acidic phospholipase A2 2 (146 aa).

A signal peptide spans 1-21 (MTPAHLLILAAVCVSPLGASS). Residues 22-27 (SRPMPL) constitute a propeptide that is removed on maturation. 7 disulfides stabilise this stretch: Cys38–Cys98, Cys53–Cys145, Cys55–Cys71, Cys70–Cys126, Cys77–Cys119, Cys87–Cys112, and Cys105–Cys117. Residues Tyr54, Gly56, and Gly58 each coordinate Ca(2+). The active site involves His74. Asp75 contributes to the Ca(2+) binding site. Asp120 is a catalytic residue.

It belongs to the phospholipase A2 family. Group I subfamily. D49 sub-subfamily. Ca(2+) serves as cofactor. In terms of tissue distribution, expressed by the venom gland.

The protein localises to the secreted. The enzyme catalyses a 1,2-diacyl-sn-glycero-3-phosphocholine + H2O = a 1-acyl-sn-glycero-3-phosphocholine + a fatty acid + H(+). Its function is as follows. PLA2 catalyzes the calcium-dependent hydrolysis of the 2-acyl groups in 3-sn-phosphoglycerides. In Naja atra (Chinese cobra), this protein is Acidic phospholipase A2 2.